Here is a 259-residue protein sequence, read N- to C-terminus: 5'-nucleotidase SurE (259 aa).

A divalent metal cation contacts are provided by Asp13, Asp14, Ser44, and Asn100.

The protein belongs to the SurE nucleotidase family. A divalent metal cation is required as a cofactor.

Its subcellular location is the cytoplasm. It catalyses the reaction a ribonucleoside 5'-phosphate + H2O = a ribonucleoside + phosphate. Its function is as follows. Nucleotidase that shows phosphatase activity on nucleoside 5'-monophosphates. The protein is 5'-nucleotidase SurE of Bacteroides thetaiotaomicron (strain ATCC 29148 / DSM 2079 / JCM 5827 / CCUG 10774 / NCTC 10582 / VPI-5482 / E50).